The sequence spans 169 residues: Large ribosomal subunit protein uL10 (169 aa).

It belongs to the universal ribosomal protein uL10 family. In terms of assembly, part of the ribosomal stalk of the 50S ribosomal subunit. The N-terminus interacts with L11 and the large rRNA to form the base of the stalk. The C-terminus forms an elongated spine to which L12 dimers bind in a sequential fashion forming a multimeric L10(L12)X complex.

In terms of biological role, forms part of the ribosomal stalk, playing a central role in the interaction of the ribosome with GTP-bound translation factors. In Rickettsia peacockii (strain Rustic), this protein is Large ribosomal subunit protein uL10.